The following is a 301-amino-acid chain: MLLSPVTSTPFSVKDILRLERERSCPAASPHPRVRKSPENFQYLRMDAEPRGSEVHNAGGGGGDRKLDGSEPPGGPCEAVLEMDAERMGEPQPGLNAASPLGGGTRVPERGVGNSGDSVRGGRSEQPKARQRRKPRVLFSQAQVLALERRFKQQRYLSAPEREHLASALQLTSTQVKIWFQNRRYKCKRQRQDKSLELAGHPLTPRRVAVPVLVRDGKPCLGPGPGAPAFPSPYSAAVSPYSCYGGYSGAPYGAGYGTCYAGAPSGPAPHTPLASAGFGHGGQNATPQGHLAATLQGVRAW.

Residues 22–135 (ERSCPAASPH…QPKARQRRKP (114 aa)) form a disordered region. The segment at residues 132 to 191 (RRKPRVLFSQAQVLALERRFKQQRYLSAPEREHLASALQLTSTQVKIWFQNRRYKCKRQR) is a DNA-binding region (homeobox).

This sequence belongs to the NK-2 homeobox family.

The protein resides in the nucleus. Functionally, acts as a transcriptional activator. In conjunction with NKX2-5, may play a role in both pharyngeal and cardiac embryonic development. The protein is Homeobox protein Nkx-2.6 (NKX2-6) of Homo sapiens (Human).